We begin with the raw amino-acid sequence, 358 residues long: DnaJ homolog subfamily B member 11 (358 aa).

The signal sequence occupies residues 1–22; it reads MAPQNLGTLCLLLLYLLGAAIA. Residues 25–90 enclose the J domain; the sequence is DFYKILGVPR…EKRKQYDTYG (66 aa). Phosphothreonine is present on Thr188. N-linked (GlcNAc...) asparagine glycosylation is present at Asn261.

As to quaternary structure, part of a large chaperone multiprotein complex comprising DNAJB11, HSP90B1, HSPA5, HYOU, PDIA2, PDIA4, PDIA6, PPIB, SDF2L1, UGGT1 and very small amounts of ERP29, but not, or at very low levels, CALR nor CANX. Binds to denatured substrates in an ATP-independent manner. Interacts via the J domain with HSPA5 in an ATP-dependent manner. In terms of processing, contains high-mannose Endo H-sensitive carbohydrates. Post-translationally, cys-169, Cys-171, Cys-193 and Cys-196 form intramolecular disulfide bonds. The preferential partner for each Cys is not known. As to expression, pancreas.

Its subcellular location is the endoplasmic reticulum lumen. In terms of biological role, as a co-chaperone for HSPA5 it is required for proper folding, trafficking or degradation of proteins. Binds directly to both unfolded proteins that are substrates for ERAD and nascent unfolded peptide chains, but dissociates from the HSPA5-unfolded protein complex before folding is completed. May help recruiting HSPA5 and other chaperones to the substrate. Stimulates HSPA5 ATPase activity. It is necessary for maturation and correct trafficking of PKD1. This Canis lupus familiaris (Dog) protein is DnaJ homolog subfamily B member 11 (DNAJB11).